Consider the following 356-residue polypeptide: 3-deoxy-alpha-D-manno-octulosonate 8-oxidase (356 aa).

This sequence belongs to the iron-containing alcohol dehydrogenase family. It depends on a divalent metal cation as a cofactor.

It carries out the reaction 3-deoxy-alpha-D-manno-oct-2-ulosonate + O2 = 3,8-dideoxy-8-oxo-alpha-D-manno-octulosonate + H2O2. Its pathway is bacterial outer membrane biogenesis; lipopolysaccharide biosynthesis. With respect to regulation, inhibited by EDTA. In terms of biological role, catalyzes the first step of the biosynthesis of Kdo8N (8-amino-3,8-dideoxy-D-manno-octulosonate) from Kdo (3-deoxy-D-manno-octulosonate). This chain is 3-deoxy-alpha-D-manno-octulosonate 8-oxidase, found in Shewanella oneidensis (strain ATCC 700550 / JCM 31522 / CIP 106686 / LMG 19005 / NCIMB 14063 / MR-1).